The sequence spans 168 residues: Pathogenesis-related protein 1C (168 aa).

A signal peptide spans 1–30; it reads MEFVLFSQMSSFFLVSTLLLFLIISHSCHA. The region spanning 38-156 is the SCP domain; that stretch reads LDAHNTARAD…NGGYIVSCNY (119 aa).

It belongs to the CRISP family. Three disulfide bonds are present.

Its subcellular location is the vacuole. Probably involved in the defense reaction of plants against pathogens. The sequence is that of Pathogenesis-related protein 1C from Nicotiana tabacum (Common tobacco).